We begin with the raw amino-acid sequence, 282 residues long: Shikimate dehydrogenase (NADP(+)) (282 aa).

Shikimate is bound by residues 18–20 and T65; that span reads SRS. Catalysis depends on K69, which acts as the Proton acceptor. An NADP(+)-binding site is contributed by E81. The shikimate site is built by N90 and D105. NADP(+)-binding positions include 130-134, 154-159, and M222; these read GAGGA and NRTPAR. A shikimate-binding site is contributed by Y224. G245 is an NADP(+) binding site.

It belongs to the shikimate dehydrogenase family. In terms of assembly, homodimer.

It carries out the reaction shikimate + NADP(+) = 3-dehydroshikimate + NADPH + H(+). Its pathway is metabolic intermediate biosynthesis; chorismate biosynthesis; chorismate from D-erythrose 4-phosphate and phosphoenolpyruvate: step 4/7. Functionally, involved in the biosynthesis of the chorismate, which leads to the biosynthesis of aromatic amino acids. Catalyzes the reversible NADPH linked reduction of 3-dehydroshikimate (DHSA) to yield shikimate (SA). This is Shikimate dehydrogenase (NADP(+)) from Acidovorax ebreus (strain TPSY) (Diaphorobacter sp. (strain TPSY)).